We begin with the raw amino-acid sequence, 366 residues long: Cell division protein FtsY homolog, chloroplastic (366 aa).

The transit peptide at 1 to 40 (MATSSAHLSFLAGRISPFSSERIGLFPLRGEFRPRMTRFR) directs the protein to the chloroplast. GTP contacts are provided by residues 171 to 178 (GVNGGGKT), 254 to 258 (DTSGR), and 318 to 321 (TKLD).

It belongs to the GTP-binding SRP family. As to quaternary structure, monomer. Interacts with FFC/cpSRP54, a component of the cpSRP complex, composed of a FFC/cpSRP54 monomer and a CAO/cpSRP43 dimer. The complex with FFC/cpSRP54 is formed when both proteins are bound with GTP. In terms of tissue distribution, expressed in green tissues. Low levels in roots and seeds.

The protein resides in the plastid. The protein localises to the chloroplast stroma. It localises to the chloroplast thylakoid membrane. In terms of biological role, signal recognition particle receptor protein. Binds GTP specifically. The GTPase activity is inhibited by the N-terminus of the protein until binding to the thylakoid membrane. Activates the GTPase activity of FFC/cpSRP54 when bound to the cpSRP complex. Required for light-harvesting chlorophyll a/b-binding protein (LHCP) integration into thylakoids. Might be also functionally linked to the Sec translocation machinery. The sequence is that of Cell division protein FtsY homolog, chloroplastic (CPFTSY) from Arabidopsis thaliana (Mouse-ear cress).